A 505-amino-acid polypeptide reads, in one-letter code: RNA-splicing ligase RtcB homolog (505 aa).

Mn(2+)-binding residues include Asp-119, Cys-122, His-227, His-259, and His-353. 226-230 is a GMP binding site; it reads NHYAE. Residues 353–354, 402–405, Ser-409, 428–431, and Lys-504 each bind GMP; these read HN, GGSM, and HGAG. The GMP-histidine intermediate role is filled by His-428.

This sequence belongs to the RtcB family. Catalytic component of the tRNA-splicing ligase complex. Requires Mn(2+) as cofactor.

The protein localises to the nucleus. Its subcellular location is the cytoplasm. It carries out the reaction a 3'-end 3'-phospho-ribonucleotide-RNA + a 5'-end dephospho-ribonucleoside-RNA + GTP = a ribonucleotidyl-ribonucleotide-RNA + GMP + diphosphate. It catalyses the reaction a 3'-end 2',3'-cyclophospho-ribonucleotide-RNA + a 5'-end dephospho-ribonucleoside-RNA + GTP + H2O = a ribonucleotidyl-ribonucleotide-RNA + GMP + diphosphate + H(+). Catalytic subunit of the tRNA-splicing ligase complex that acts by directly joining spliced tRNA halves to mature-sized tRNAs. Required for the ligation of mRNAs and specifically, regulates xbp-1 mRNA splicing during the endoplasmic reticulum stress-induced unfolded protein response. Has a neuroprotective role in the age-dependent degeneration of dopamine neurons, which is mediated by xbp-1. The protein is RNA-splicing ligase RtcB homolog of Caenorhabditis elegans.